Here is a 389-residue protein sequence, read N- to C-terminus: Phospho-N-acetylmuramoyl-pentapeptide-transferase (389 aa).

10 helical membrane-spanning segments follow: residues 25 to 45 (RAVM…PWVI), 73 to 93 (TMGG…WGDL), 97 to 117 (FIWI…VDDY), 135 to 155 (FWQS…VSEA), 190 to 210 (ISYP…IVGA), 222 to 242 (GLVI…AYVM), 258 to 278 (GAGE…AFLW), 286 to 306 (VFMG…VAVI), 311 to 331 (IVLF…MLQV), and 366 to 386 (QVVV…LSTL).

The protein belongs to the glycosyltransferase 4 family. MraY subfamily. The cofactor is Mg(2+).

The protein resides in the cell inner membrane. It catalyses the reaction UDP-N-acetyl-alpha-D-muramoyl-L-alanyl-gamma-D-glutamyl-meso-2,6-diaminopimeloyl-D-alanyl-D-alanine + di-trans,octa-cis-undecaprenyl phosphate = di-trans,octa-cis-undecaprenyl diphospho-N-acetyl-alpha-D-muramoyl-L-alanyl-D-glutamyl-meso-2,6-diaminopimeloyl-D-alanyl-D-alanine + UMP. It functions in the pathway cell wall biogenesis; peptidoglycan biosynthesis. Its function is as follows. Catalyzes the initial step of the lipid cycle reactions in the biosynthesis of the cell wall peptidoglycan: transfers peptidoglycan precursor phospho-MurNAc-pentapeptide from UDP-MurNAc-pentapeptide onto the lipid carrier undecaprenyl phosphate, yielding undecaprenyl-pyrophosphoryl-MurNAc-pentapeptide, known as lipid I. The sequence is that of Phospho-N-acetylmuramoyl-pentapeptide-transferase from Burkholderia mallei (strain NCTC 10247).